A 329-amino-acid polypeptide reads, in one-letter code: Cardiolipin synthase (CMP-forming) (329 aa).

The N-terminal 34 residues, 1-34 (MPPSVATHASLLLKAAAAAAHLHPKPFFSPRAAP), are a transit peptide targeting the mitochondrion. A disordered region spans residues 27–55 (FFSPRAAPPRIPSAPAPPAAGGSRYRPTT). Over residues 32 to 44 (AAPPRIPSAPAPP) the composition is skewed to pro residues. 5 helical membrane-spanning segments follow: residues 134–154 (LLTL…LLIS), 156–176 (FYME…AAAV), 194–214 (FGAF…LVLL), 228–248 (PWLL…MSAV), and 298–318 (VTSG…SLVV). Residues 319 to 329 (YMRKIWRILLK) are Mitochondrial intermembrane-facing.

It belongs to the CDP-alcohol phosphatidyltransferase class-I family. It depends on Mn(2+) as a cofactor.

It is found in the mitochondrion inner membrane. The catalysed reaction is a CDP-1,2-diacyl-sn-glycerol + a 1,2-diacyl-sn-glycero-3-phospho-(1'-sn-glycerol) = a cardiolipin + CMP + H(+). Its function is as follows. Catalyzes the synthesis of cardiolipin (CL) (diphosphatidylglycerol) by specifically transferring a phosphatidyl group from CDP-diacylglycerol to phosphatidylglycerol (PG). CL is a key phospholipid in mitochondrial membranes and plays important roles in maintaining the functional integrity and dynamics of mitochondria under both optimal and stress conditions. The chain is Cardiolipin synthase (CMP-forming) from Oryza sativa subsp. japonica (Rice).